A 616-amino-acid polypeptide reads, in one-letter code: MALLQISEPGLSAAPHQRRLAAGIDLGTTNSLVATVRSGQAETLPDHEGRHLLPSVVHYQQQGHTVGYAARDNAAQDTTNTISSVKRMMGRSLADIQARYPHLPYRFKASVNGLPMIDTAAGLLNPVRVSADILKALAARASESLSGELDGVVITVPAYFDDAQRQGTKDAARLAGLHVLRLLNEPTAAAIAYGLDSGKEGVIAVYDLGGGTFDISILRLSRGVFEVLATGGDSALGGDDFDHLLADYIREQAGIADRSDNRVQRELLDAAIAAKIALSDADTVRVNVAGWQGEITREQFNDLISALVKRTLLACRRALKDAGVDPQDVLEVVMVGGSTRVPLVRERVGEFFGRTPLTAIDPDKVVAIGAAIQADILVGNKPDSEMLLLDVIPLSLGLETMGGLVEKVIPRNTTIPVARAQDFTTFKDGQTAMSIHVMQGERELVQDCRSLARFALRGIPPLPAGGAHIRVTFQVDADGLLSVTAMEKSTGVEASIQVKPSYGLTDGEIASMIKDSMSFAEQDVKARMLAEQKVEAARVLESLTGALTADAALLSAAERQCIDDAAAHLSAVAQGDDVDAIEQAIKNVDKQTQEFAARRMDQSVRRALKGHSVDEV.

It belongs to the heat shock protein 70 family.

Its function is as follows. Chaperone involved in the maturation of iron-sulfur cluster-containing proteins. Has a low intrinsic ATPase activity which is markedly stimulated by HscB. Involved in the maturation of IscU. The polypeptide is Chaperone protein HscA (Salmonella paratyphi B (strain ATCC BAA-1250 / SPB7)).